We begin with the raw amino-acid sequence, 119 residues long: uncharacterized protein (119 aa).

This is an uncharacterized protein from Escherichia coli (strain K12).